Here is a 241-residue protein sequence, read N- to C-terminus: Ubiquinone biosynthesis O-methyltransferase (241 aa).

4 residues coordinate S-adenosyl-L-methionine: Arg-46, Gly-66, Asp-87, and Met-131.

This sequence belongs to the methyltransferase superfamily. UbiG/COQ3 family.

It carries out the reaction a 3-demethylubiquinol + S-adenosyl-L-methionine = a ubiquinol + S-adenosyl-L-homocysteine + H(+). The enzyme catalyses a 3-(all-trans-polyprenyl)benzene-1,2-diol + S-adenosyl-L-methionine = a 2-methoxy-6-(all-trans-polyprenyl)phenol + S-adenosyl-L-homocysteine + H(+). It participates in cofactor biosynthesis; ubiquinone biosynthesis. In terms of biological role, O-methyltransferase that catalyzes the 2 O-methylation steps in the ubiquinone biosynthetic pathway. This Bordetella bronchiseptica (strain ATCC BAA-588 / NCTC 13252 / RB50) (Alcaligenes bronchisepticus) protein is Ubiquinone biosynthesis O-methyltransferase.